The following is a 256-amino-acid chain: Cell division protein DivIB (256 aa).

Residues 1–23 (MSKDLISTDEYIKIKKKRKRIKK) are Cytoplasmic-facing. Residues 24–44 (IVVLFIFLISILVTLCLKIPY) form a helical membrane-spanning segment. The POTRA domain occupies 45 to 113 (FNIESIEIKG…NKLQIYVKER (69 aa)). At 45 to 256 (FNIESIEIKG…EGNPVFYIEK (212 aa)) the chain is on the extracellular side.

This sequence belongs to the FtsQ/DivIB family. DivIB subfamily.

The protein resides in the cell membrane. Functionally, cell division protein that may be involved in stabilizing or promoting the assembly of the division complex. This chain is Cell division protein DivIB, found in Clostridium botulinum (strain Hall / ATCC 3502 / NCTC 13319 / Type A).